Here is a 210-residue protein sequence, read N- to C-terminus: Ribosomal RNA large subunit methyltransferase E (210 aa).

S-adenosyl-L-methionine is bound by residues G61, W63, D81, D97, and D122. K162 functions as the Proton acceptor in the catalytic mechanism. The span at 187–196 (KPEASRKRSP) shows a compositional bias: basic and acidic residues. Positions 187 to 210 (KPEASRKRSPEVYALGQGKRAHMK) are disordered.

This sequence belongs to the class I-like SAM-binding methyltransferase superfamily. RNA methyltransferase RlmE family.

The protein resides in the cytoplasm. The enzyme catalyses uridine(2552) in 23S rRNA + S-adenosyl-L-methionine = 2'-O-methyluridine(2552) in 23S rRNA + S-adenosyl-L-homocysteine + H(+). Functionally, specifically methylates the uridine in position 2552 of 23S rRNA at the 2'-O position of the ribose in the fully assembled 50S ribosomal subunit. The chain is Ribosomal RNA large subunit methyltransferase E from Stenotrophomonas maltophilia (strain R551-3).